Consider the following 185-residue polypeptide: Elongation factor P (185 aa).

The protein belongs to the elongation factor P family.

Its subcellular location is the cytoplasm. Its pathway is protein biosynthesis; polypeptide chain elongation. Involved in peptide bond synthesis. Stimulates efficient translation and peptide-bond synthesis on native or reconstituted 70S ribosomes in vitro. Probably functions indirectly by altering the affinity of the ribosome for aminoacyl-tRNA, thus increasing their reactivity as acceptors for peptidyl transferase. The sequence is that of Elongation factor P from Paraburkholderia phytofirmans (strain DSM 17436 / LMG 22146 / PsJN) (Burkholderia phytofirmans).